The sequence spans 366 residues: Ferredoxin--NADP reductase (366 aa).

Residues D51, Q59, Y64, V104, F139, D308, and T349 each coordinate FAD.

It belongs to the ferredoxin--NADP reductase type 2 family. As to quaternary structure, homodimer. It depends on FAD as a cofactor.

The enzyme catalyses 2 reduced [2Fe-2S]-[ferredoxin] + NADP(+) + H(+) = 2 oxidized [2Fe-2S]-[ferredoxin] + NADPH. The chain is Ferredoxin--NADP reductase from Polaromonas naphthalenivorans (strain CJ2).